A 165-amino-acid polypeptide reads, in one-letter code: MAVVEIEEIPALLQSGQTIAGLDLGTKTIGLAVSDLGLSFAHPRPVIKRVKFSIDAQVLLKALDADKVGVIVIGLPMNMDGTSGPRVQATRAFVRTMQPLTDLPFVFWDERLSTVAAERALIGMDVSRGKRADRIDSAAASFILQGALDRLHSIRRSASDDYDAG.

The protein belongs to the YqgF nuclease family.

It localises to the cytoplasm. Functionally, could be a nuclease involved in processing of the 5'-end of pre-16S rRNA. The polypeptide is Putative pre-16S rRNA nuclease (Brucella anthropi (strain ATCC 49188 / DSM 6882 / CCUG 24695 / JCM 21032 / LMG 3331 / NBRC 15819 / NCTC 12168 / Alc 37) (Ochrobactrum anthropi)).